Here is a 189-residue protein sequence, read N- to C-terminus: Probable hydrogen peroxide-inducible genes activator (189 aa).

In terms of domain architecture, HTH lysR-type spans 8 to 65 (PTLAGLRAFAAVAEKQHFGSAASALGVNQSTLSQALAGLESGLGVRLIERSTRRVFLT). Residues 25–44 (FGSAASALGVNQSTLSQALA) constitute a DNA-binding region (H-T-H motif).

It belongs to the LysR transcriptional regulatory family.

In terms of biological role, required for the induction the katG gene for catalase. Involved in the response to hydrogen peroxide. The polypeptide is Probable hydrogen peroxide-inducible genes activator (oxyR) (Mycobacterium xenopi).